Consider the following 164-residue polypeptide: Large ribosomal subunit protein uL10 (164 aa).

Belongs to the universal ribosomal protein uL10 family. As to quaternary structure, part of the ribosomal stalk of the 50S ribosomal subunit. The N-terminus interacts with L11 and the large rRNA to form the base of the stalk. The C-terminus forms an elongated spine to which L12 dimers bind in a sequential fashion forming a multimeric L10(L12)X complex.

Its function is as follows. Forms part of the ribosomal stalk, playing a central role in the interaction of the ribosome with GTP-bound translation factors. The polypeptide is Large ribosomal subunit protein uL10 (Photobacterium profundum (strain SS9)).